The sequence spans 762 residues: Multifunctional tryptophan biosynthesis protein (762 aa).

The Glutamine amidotransferase type-1 domain occupies Asn-25 to Glu-224. An L-glutamine-binding site is contributed by Gly-76–Gly-78. Cys-104 (nucleophile; for GATase activity) is an active-site residue. Residues Gln-108 and Ser-154 to Leu-155 contribute to the L-glutamine site. Active-site for GATase activity residues include His-198 and Glu-200. The segment at Ile-251–Cys-515 is indole-3-glycerol phosphate synthase. Positions Leu-531 to Arg-762 are N-(5'-phosphoribosyl)anthranilate isomerase.

In terms of assembly, tetramer of two components I and two components II.

It catalyses the reaction chorismate + L-glutamine = anthranilate + pyruvate + L-glutamate + H(+). The enzyme catalyses N-(5-phospho-beta-D-ribosyl)anthranilate = 1-(2-carboxyphenylamino)-1-deoxy-D-ribulose 5-phosphate. It carries out the reaction 1-(2-carboxyphenylamino)-1-deoxy-D-ribulose 5-phosphate + H(+) = (1S,2R)-1-C-(indol-3-yl)glycerol 3-phosphate + CO2 + H2O. The protein operates within amino-acid biosynthesis; L-tryptophan biosynthesis; L-tryptophan from chorismate: step 1/5. It functions in the pathway amino-acid biosynthesis; L-tryptophan biosynthesis; L-tryptophan from chorismate: step 3/5. Its pathway is amino-acid biosynthesis; L-tryptophan biosynthesis; L-tryptophan from chorismate: step 4/5. Functionally, trifunctional enzyme bearing the Gln amidotransferase (GATase) domain of anthranilate synthase, indole-glycerolphosphate synthase, and phosphoribosylanthranilate isomerase activities. The chain is Multifunctional tryptophan biosynthesis protein (trp-1) from Neurospora crassa (strain ATCC 24698 / 74-OR23-1A / CBS 708.71 / DSM 1257 / FGSC 987).